A 507-amino-acid chain; its full sequence is Hippocampus abundant transcript-like protein 1 (507 aa).

Residues 1-22 (MSTDGESPEEPGWKAVASPKAS) form a disordered region. At 1–51 (MSTDGESPEEPGWKAVASPKASAMPEKRGSAQAASSSWLQGFGQPSVYHAA) the chain is on the extracellular side. The chain crosses the membrane as a helical span at residues 52–72 (FVIFFEFFAWGLLTTPMLTVL). Residues 73-84 (HETFPQHTFLMN) are Cytoplasmic-facing. A helical transmembrane segment spans residues 85–105 (GLIQGVKGLLSFLSAPLIGAL). Over 106 to 113 (SDVWGRKP) the chain is Extracellular. A helical transmembrane segment spans residues 114–134 (FLLGTVFFTCFPIPLMRISPW). The Cytoplasmic segment spans residues 135–136 (WY). A helical membrane pass occupies residues 137–157 (FGMISVSGVFSVTFSVIFAYV). The Extracellular portion of the chain corresponds to 158–170 (ADFTQEHERSTAY). The chain crosses the membrane as a helical span at residues 171-191 (GWVSATFAASLVSSPAIGTYL). Topologically, residues 192 to 198 (SSNYGDS) are cytoplasmic. Residues 199–219 (LVVLVATVVALLDICFILVAV) form a helical membrane-spanning segment. Residues 220–257 (PESLPEKIRPASWGAQISWKQADPFASLKKVGKDSTVL) are Extracellular-facing. The helical transmembrane segment at 258 to 278 (LICITVFLSYLPEAGQYSSFF) threads the bilayer. The Cytoplasmic portion of the chain corresponds to 279–283 (LYLRQ). A helical membrane pass occupies residues 284–304 (VIGFGSVKIVAFIAMVGILSI). Residues 305 to 323 (LAQTVFLSKLMRSLGNKNT) lie on the Extracellular side of the membrane. A helical membrane pass occupies residues 324 to 344 (VLLGLGFQILQLAWYGFGAQA). Residues 345–347 (WMM) are Cytoplasmic-facing. The chain crosses the membrane as a helical span at residues 348–368 (WAAGTVAAMSSITFPAVSALI). Residues 369–389 (SRNAESDQQGVAQGIITGIRG) are Extracellular-facing. Residues 390-410 (LCNGLGPALYGFIFYLFHVEL) traverse the membrane as a helical segment. The Cytoplasmic portion of the chain corresponds to 411 to 430 (NELGPKLDSDNDPLQGAFIP). The chain crosses the membrane as a helical span at residues 431-451 (GPPFLFGACIVLMSFLVALFI). Residues 452 to 507 (PEYRKTGGVQKHNNSISGSLSTPPERGSDEDIEPLLQDSNIWELSSEEPGNQCTEL) are Extracellular-facing. Positions 462–473 (KHNNSISGSLST) are enriched in polar residues. The tract at residues 462-483 (KHNNSISGSLSTPPERGSDEDI) is disordered. Residue asparagine 464 is glycosylated (N-linked (GlcNAc...) asparagine).

Belongs to the major facilitator superfamily.

It is found in the membrane. The chain is Hippocampus abundant transcript-like protein 1 from Rattus norvegicus (Rat).